Here is an 86-residue protein sequence, read N- to C-terminus: Large ribosomal subunit protein bL27 (86 aa).

The protein belongs to the bacterial ribosomal protein bL27 family.

The sequence is that of Large ribosomal subunit protein bL27 from Xanthomonas oryzae pv. oryzae (strain PXO99A).